The following is a 74-amino-acid chain: Putative membrane protein insertion efficiency factor (74 aa).

The protein belongs to the UPF0161 family.

The protein resides in the cell inner membrane. Its function is as follows. Could be involved in insertion of integral membrane proteins into the membrane. The sequence is that of Putative membrane protein insertion efficiency factor from Syntrophus aciditrophicus (strain SB).